Reading from the N-terminus, the 559-residue chain is Transcription factor tstO (559 aa).

Positions 23–50 form a DNA-binding region, zn(2)-C6 fungal-type; that stretch reads CDACQSAKVRCGREKPTCRRCQNQGKTC. 2 disordered regions span residues 166–316 and 453–477; these read GPST…TGFS and ASPPPSIFDNNNTSTTTTTSSISTA. The span at 222-232 shows a compositional bias: low complexity; the sequence is SSESLSLEPSS. Polar residues predominate over residues 255 to 267; sequence TRGSQKISPNPHS. Over residues 268–279 the composition is skewed to basic and acidic residues; sequence IDSRTSSRDKSF. Low complexity-rich tracts occupy residues 286-316 and 462-477; these read STLGSRTPNTTTTSSSASSVGLTGSSTTGFS and NNNTSTTTTTSSISTA.

The protein resides in the nucleus. Transcription factore; part of the gene cluster that mediates the biosynthesis of the antihypercholesterolemic agents phomoidrides which are dimeric anhydrides. Probably regulates the expression of the genes from the cluster. The sequence is that of Transcription factor tstO from Talaromyces stipitatus (strain ATCC 10500 / CBS 375.48 / QM 6759 / NRRL 1006) (Penicillium stipitatum).